Consider the following 257-residue polypeptide: Snake venom serine protease rhinocerase 4 (257 aa).

Positions 1 to 17 (VLIRVLANLLVLQLSYA) are cleaved as a signal peptide. A propeptide spanning residues 18–23 (QKSSEL) is cleaved from the precursor. One can recognise a Peptidase S1 domain in the interval 24 to 248 (VIGGAECNIN…YTDWIRSIIG (225 aa)). Cystine bridges form between Cys30–Cys162, Cys49–Cys65, Cys97–Cys255, Cys141–Cys209, Cys173–Cys188, and Cys199–Cys224. Residue Asn43 is glycosylated (N-linked (GlcNAc...) asparagine). His64 functions as the Charge relay system in the catalytic mechanism. N-linked (GlcNAc...) asparagine glycans are attached at residues Asn78 and Asn100. The Charge relay system role is filled by Asp109. Ser203 acts as the Charge relay system in catalysis. An N-linked (GlcNAc...) asparagine glycan is attached at Asn250.

The protein belongs to the peptidase S1 family. Snake venom subfamily. Expressed by the venom gland.

The protein localises to the secreted. In terms of biological role, snake venom serine protease that may act in the hemostasis system of the prey. The chain is Snake venom serine protease rhinocerase 4 from Bitis rhinoceros (West African gaboon viper).